The sequence spans 297 residues: ATP synthase gamma chain (297 aa).

This sequence belongs to the ATPase gamma chain family. In terms of assembly, F-type ATPases have 2 components, CF(1) - the catalytic core - and CF(0) - the membrane proton channel. CF(1) has five subunits: alpha(3), beta(3), gamma(1), delta(1), epsilon(1). CF(0) has three main subunits: a, b and c.

It localises to the cell membrane. Functionally, produces ATP from ADP in the presence of a proton gradient across the membrane. The gamma chain is believed to be important in regulating ATPase activity and the flow of protons through the CF(0) complex. In Arthrobacter sp. (strain FB24), this protein is ATP synthase gamma chain.